The sequence spans 335 residues: Deoxyhypusine hydroxylase (335 aa).

HEAT-like PBS-type repeat units follow at residues 74-100 (LKHE…VLED), 107-133 (CRHE…LRDD), 203-233 (KRYR…LAEG), 241-267 (FRHE…TLSD), and 274-301 (VRHE…FVND). His76, Glu77, His109, and Glu110 together coordinate Fe cation. The Fe cation site is built by His243, Glu244, His276, and Glu277.

This sequence belongs to the deoxyhypusine hydroxylase family. Requires Fe(2+) as cofactor.

Its subcellular location is the cytoplasm. It is found in the nucleus. It carries out the reaction [eIF5A protein]-deoxyhypusine + AH2 + O2 = [eIF5A protein]-hypusine + A + H2O. The protein operates within protein modification; eIF5A hypusination. In terms of biological role, catalyzes the hydroxylation of the N(6)-(4-aminobutyl)-L-lysine intermediate to form hypusine, an essential post-translational modification only found in mature eIF-5A factor. This chain is Deoxyhypusine hydroxylase, found in Coccidioides immitis (strain RS) (Valley fever fungus).